Here is a 344-residue protein sequence, read N- to C-terminus: Selenide, water dikinase (344 aa).

Residue Cys15 is part of the active site. Residues Lys18 and 46–48 contribute to the ATP site; that span reads TKD. Asp49 contributes to the Mg(2+) binding site. Residues Asp66, Asp89, and 137 to 139 each bind ATP; that span reads GHS. Asp89 contributes to the Mg(2+) binding site. Asp225 lines the Mg(2+) pocket.

It belongs to the selenophosphate synthase 1 family. Class I subfamily. Homodimer. It depends on Mg(2+) as a cofactor.

The catalysed reaction is hydrogenselenide + ATP + H2O = selenophosphate + AMP + phosphate + 2 H(+). Functionally, synthesizes selenophosphate from selenide and ATP. In Colwellia psychrerythraea (strain 34H / ATCC BAA-681) (Vibrio psychroerythus), this protein is Selenide, water dikinase.